The chain runs to 324 residues: NADH-ubiquinone oxidoreductase chain 1 (324 aa).

A run of 8 helical transmembrane segments spans residues 9-29, 75-95, 106-126, 146-166, 178-198, 212-232, 259-279, and 299-319; these read LINPLAYAVPVLIAVAFLTLV, ILFLTAPVLALILAMMLWAPM, LGILFIMAISSLAVYSILGSG, ISYEVSLGLILLSAVIFSGGY, TWLLLPLWPLAIMWFISTLAE, ELVSGFNVEYAAGPFALFFLA, ELMTISIATKTAMLSILFLWM, and FLPITLVLVLWHIALPIALAG.

This sequence belongs to the complex I subunit 1 family. Core subunit of respiratory chain NADH dehydrogenase (Complex I) which is composed of 45 different subunits.

The protein resides in the mitochondrion inner membrane. The enzyme catalyses a ubiquinone + NADH + 5 H(+)(in) = a ubiquinol + NAD(+) + 4 H(+)(out). In terms of biological role, core subunit of the mitochondrial membrane respiratory chain NADH dehydrogenase (Complex I) which catalyzes electron transfer from NADH through the respiratory chain, using ubiquinone as an electron acceptor. Essential for the catalytic activity and assembly of complex I. The sequence is that of NADH-ubiquinone oxidoreductase chain 1 (mt-nd1) from Danio rerio (Zebrafish).